The chain runs to 357 residues: Acyl-coenzyme A diphosphatase NUDT19 (357 aa).

Positions 10–242 (AATVMLAAGW…IWLAPPQFYE (233 aa)) constitute a Nudix hydrolase domain. A Nudix box motif is present at residues 97–118 (AALPDDVALRICAIRETFEEAG). Positions 112 and 116 each coordinate Mg(2+). N6-succinyllysine is present on Lys-300. Residues 355 to 357 (ARL) carry the Microbody targeting signal motif.

The protein belongs to the Nudix hydrolase family. Monomer. Mg(2+) is required as a cofactor. Requires Mn(2+) as cofactor.

It localises to the peroxisome. The catalysed reaction is an acyl-CoA + H2O = an acyl-4'-phosphopantetheine + adenosine 3',5'-bisphosphate + 2 H(+). It carries out the reaction CoA + H2O = (R)-4'-phosphopantetheine + adenosine 3',5'-bisphosphate + 2 H(+). The enzyme catalyses hexanoyl-CoA + H2O = hexanoyl-4'-phosphopantetheine + adenosine 3',5'-bisphosphate + 2 H(+). It catalyses the reaction octanoyl-CoA + H2O = S-octanoyl-4'-phosphopantetheine + adenosine 3',5'-bisphosphate + 2 H(+). The catalysed reaction is butanoyl-CoA + H2O = S-butanoyl-4'-phosphopantetheine + adenosine 3',5'-bisphosphate + 2 H(+). It carries out the reaction propanoyl-CoA + H2O = propanoyl-4'-phosphopantetheine + adenosine 3',5'-bisphosphate + 2 H(+). The enzyme catalyses malonyl-CoA + H2O = malonyl-4'-phosphopantetheine + adenosine 3',5'-bisphosphate + 2 H(+). It catalyses the reaction succinyl-CoA + H2O = succinyl-4'-phosphopantetheine + adenosine 3',5'-bisphosphate + 2 H(+). The catalysed reaction is choloyl-CoA + H2O = S-choloyl-4'-phosphopantetheine + adenosine 3',5'-bisphosphate + 2 H(+). It carries out the reaction 4,8-dimethylnonanoyl-CoA + H2O = S-(4,8-dimethylnonanoyl)-4'-phosphopantetheine + adenosine 3',5'-bisphosphate + 2 H(+). The enzyme catalyses (9Z,12Z,15Z)-octadecatrienoyl-CoA + H2O = S-(9Z,12Z,15Z-octadecatrienoyl)-4'-phosphopantetheine + adenosine 3',5'-bisphosphate + 2 H(+). It catalyses the reaction (9Z,12Z)-octadecadienoyl-CoA + H2O = S-(9Z,12Z-octadecadienoyl)-4'-phosphopantetheine + adenosine 3',5'-bisphosphate + 2 H(+). The catalysed reaction is (9Z)-hexadecenoyl-CoA + H2O = S-(9Z-hexadecenoyl)-4'-phosphopantetheine + adenosine 3',5'-bisphosphate + 2 H(+). It carries out the reaction (9Z)-tetradecenoyl-CoA + H2O = S-(9Z-tetradecenoyl)-4'-phosphopantetheine + adenosine 3',5'-bisphosphate + 2 H(+). The enzyme catalyses (6Z)-octenoyl-CoA + H2O = S-(6Z-octenoyl)-4'-phosphopantetheine + adenosine 3',5'-bisphosphate + 2 H(+). It catalyses the reaction hexadecanoyl-CoA + H2O = S-hexadecanoyl-4'-phosphopantetheine + adenosine 3',5'-bisphosphate + 2 H(+). The catalysed reaction is tetradecanoyl-CoA + H2O = tetradecanoyl-4'-phosphopantetheine + adenosine 3',5'-bisphosphate + 2 H(+). It carries out the reaction dodecanoyl-CoA + H2O = S-dodecanoyl-4'-phosphopantetheine + adenosine 3',5'-bisphosphate + 2 H(+). The enzyme catalyses a 5'-end CoA-ribonucleoside in mRNA + H2O = a 5'-end phospho-adenosine-phospho-ribonucleoside in mRNA + (R)-4'-phosphopantetheine + 2 H(+). Fatty acyl-coenzyme A (CoA) diphosphatase that hydrolyzes fatty acyl-CoA to yield acyl-4'-phosphopantetheine and adenosine 3',5'-bisphosphate. Mediates the hydrolysis of a wide range of CoA esters, including choloyl-CoA and branched-chain fatty-acyl-CoA esters and at low substrate concentrations medium and long-chain fatty-acyl-CoA esters are the primary substrates. Highest activity seen with medium-chain acyl-CoA esters and higher rates of activity seen with the unsaturated acyl-CoA esters compared with the saturated esters. Exhibits decapping activity towards dpCoA-capped RNAs in vitro. This Rattus norvegicus (Rat) protein is Acyl-coenzyme A diphosphatase NUDT19 (Nudt19).